The primary structure comprises 146 residues: Large ribosomal subunit protein uL11 (146 aa).

It belongs to the universal ribosomal protein uL11 family. In terms of assembly, part of the ribosomal stalk of the 50S ribosomal subunit. Interacts with L10 and the large rRNA to form the base of the stalk. L10 forms an elongated spine to which L12 dimers bind in a sequential fashion forming a multimeric L10(L12)X complex. Post-translationally, one or more lysine residues are methylated.

Forms part of the ribosomal stalk which helps the ribosome interact with GTP-bound translation factors. The protein is Large ribosomal subunit protein uL11 of Salinibacter ruber (strain DSM 13855 / M31).